The chain runs to 215 residues: Chaperone protein TorD (215 aa).

The protein belongs to the TorD/DmsD family. TorD subfamily.

Its subcellular location is the cytoplasm. Involved in the biogenesis of TorA. Acts on TorA before the insertion of the molybdenum cofactor and, as a result, probably favors a conformation of the apoenzyme that is competent for acquiring the cofactor. This is Chaperone protein TorD from Vibrio atlanticus (strain LGP32) (Vibrio splendidus (strain Mel32)).